Here is a 44-residue protein sequence, read N- to C-terminus: Photosystem I reaction center subunit IX (44 aa).

A helical transmembrane segment spans residues 9–29 (YMRSAPVVAAAWITMTAGIII).

Belongs to the PsaJ family.

It is found in the cellular thylakoid membrane. In terms of biological role, may help in the organization of the PsaE and PsaF subunits. The sequence is that of Photosystem I reaction center subunit IX from Prochlorococcus marinus (strain MIT 9312).